A 105-amino-acid polypeptide reads, in one-letter code: Large ribosomal subunit protein eL36 (105 aa).

Residue lysine 62 is modified to N6-acetyllysine.

It belongs to the eukaryotic ribosomal protein eL36 family. In terms of assembly, component of the large ribosomal subunit.

It localises to the cytoplasm. The protein localises to the cytosol. In terms of biological role, component of the large ribosomal subunit. The ribosome is a large ribonucleoprotein complex responsible for the synthesis of proteins in the cell. This Homo sapiens (Human) protein is Large ribosomal subunit protein eL36 (RPL36).